We begin with the raw amino-acid sequence, 326 residues long: UDP-3-O-acylglucosamine N-acyltransferase (326 aa).

His-225 functions as the Proton acceptor in the catalytic mechanism.

Belongs to the transferase hexapeptide repeat family. LpxD subfamily. Homotrimer.

It carries out the reaction a UDP-3-O-[(3R)-3-hydroxyacyl]-alpha-D-glucosamine + a (3R)-hydroxyacyl-[ACP] = a UDP-2-N,3-O-bis[(3R)-3-hydroxyacyl]-alpha-D-glucosamine + holo-[ACP] + H(+). It participates in bacterial outer membrane biogenesis; LPS lipid A biosynthesis. Its function is as follows. Catalyzes the N-acylation of UDP-3-O-acylglucosamine using 3-hydroxyacyl-ACP as the acyl donor. Is involved in the biosynthesis of lipid A, a phosphorylated glycolipid that anchors the lipopolysaccharide to the outer membrane of the cell. The protein is UDP-3-O-acylglucosamine N-acyltransferase of Acidovorax ebreus (strain TPSY) (Diaphorobacter sp. (strain TPSY)).